Here is a 318-residue protein sequence, read N- to C-terminus: Ribonuclease Z (318 aa).

His-62, His-64, Asp-66, His-67, His-144, Asp-215, and His-273 together coordinate Zn(2+). Asp-66 serves as the catalytic Proton acceptor.

The protein belongs to the RNase Z family. As to quaternary structure, homodimer. Requires Zn(2+) as cofactor.

The enzyme catalyses Endonucleolytic cleavage of RNA, removing extra 3' nucleotides from tRNA precursor, generating 3' termini of tRNAs. A 3'-hydroxy group is left at the tRNA terminus and a 5'-phosphoryl group is left at the trailer molecule.. Zinc phosphodiesterase, which displays some tRNA 3'-processing endonuclease activity. Probably involved in tRNA maturation, by removing a 3'-trailer from precursor tRNA. This is Ribonuclease Z from Prochlorococcus marinus (strain MIT 9313).